The sequence spans 299 residues: Putative KilA-N domain-containing protein R879 (299 aa).

Residues 1–75 (MKSDNGILMS…IKVSEIVLSY (75 aa)) form the KilA-N domain. Residues 76-150 (HAKEAIKEKE…DKKINELLSK (75 aa)) are a coiled coil.

In Acanthamoeba polyphaga mimivirus (APMV), this protein is Putative KilA-N domain-containing protein R879.